The following is a 101-amino-acid chain: Large ribosomal subunit protein bL20 (101 aa).

This sequence belongs to the bacterial ribosomal protein bL20 family.

Functionally, binds directly to 23S ribosomal RNA and is necessary for the in vitro assembly process of the 50S ribosomal subunit. It is not involved in the protein synthesizing functions of that subunit. This Carsonella ruddii (strain PV) protein is Large ribosomal subunit protein bL20 (rplT).